Consider the following 208-residue polypeptide: Imidazole glycerol phosphate synthase subunit HisH (208 aa).

The region spanning 1–206 (MIVIIDYDTG…KEVIRSCKSS (206 aa)) is the Glutamine amidotransferase type-1 domain. The Nucleophile role is filled by cysteine 79. Active-site residues include histidine 181 and glutamate 183.

In terms of assembly, heterodimer of HisH and HisF.

The protein localises to the cytoplasm. The enzyme catalyses 5-[(5-phospho-1-deoxy-D-ribulos-1-ylimino)methylamino]-1-(5-phospho-beta-D-ribosyl)imidazole-4-carboxamide + L-glutamine = D-erythro-1-(imidazol-4-yl)glycerol 3-phosphate + 5-amino-1-(5-phospho-beta-D-ribosyl)imidazole-4-carboxamide + L-glutamate + H(+). It catalyses the reaction L-glutamine + H2O = L-glutamate + NH4(+). It functions in the pathway amino-acid biosynthesis; L-histidine biosynthesis; L-histidine from 5-phospho-alpha-D-ribose 1-diphosphate: step 5/9. IGPS catalyzes the conversion of PRFAR and glutamine to IGP, AICAR and glutamate. The HisH subunit catalyzes the hydrolysis of glutamine to glutamate and ammonia as part of the synthesis of IGP and AICAR. The resulting ammonia molecule is channeled to the active site of HisF. This is Imidazole glycerol phosphate synthase subunit HisH from Listeria welshimeri serovar 6b (strain ATCC 35897 / DSM 20650 / CCUG 15529 / CIP 8149 / NCTC 11857 / SLCC 5334 / V8).